The following is a 397-amino-acid chain: Tryptophan synthase beta chain (397 aa).

Lys88 carries the post-translational modification N6-(pyridoxal phosphate)lysine.

The protein belongs to the TrpB family. In terms of assembly, tetramer of two alpha and two beta chains. Pyridoxal 5'-phosphate serves as cofactor.

The enzyme catalyses (1S,2R)-1-C-(indol-3-yl)glycerol 3-phosphate + L-serine = D-glyceraldehyde 3-phosphate + L-tryptophan + H2O. Its pathway is amino-acid biosynthesis; L-tryptophan biosynthesis; L-tryptophan from chorismate: step 5/5. The beta subunit is responsible for the synthesis of L-tryptophan from indole and L-serine. This Haemophilus influenzae (strain ATCC 51907 / DSM 11121 / KW20 / Rd) protein is Tryptophan synthase beta chain (trpB).